A 394-amino-acid polypeptide reads, in one-letter code: Phosphoglycerate kinase (394 aa).

Substrate is bound by residues 21-23 (DFN), R36, 59-62 (HLGR), R118, and R151. Residue S183 is modified to Phosphoserine. An ATP-binding site is contributed by K201. T299 is modified (phosphothreonine). ATP-binding positions include E323 and 350 to 353 (GGDS).

The protein belongs to the phosphoglycerate kinase family. As to quaternary structure, monomer.

It localises to the cytoplasm. The enzyme catalyses (2R)-3-phosphoglycerate + ATP = (2R)-3-phospho-glyceroyl phosphate + ADP. It functions in the pathway carbohydrate degradation; glycolysis; pyruvate from D-glyceraldehyde 3-phosphate: step 2/5. The sequence is that of Phosphoglycerate kinase (pgk) from Bacillus subtilis (strain 168).